Reading from the N-terminus, the 303-residue chain is Sulfate adenylyltransferase subunit 2 (303 aa).

The disordered stretch occupies residues 282–303; the sequence is SGRLIDHDESGSMEKKKREGYF.

It belongs to the PAPS reductase family. CysD subfamily. In terms of assembly, heterodimer composed of CysD, the smaller subunit, and CysN.

The catalysed reaction is sulfate + ATP + H(+) = adenosine 5'-phosphosulfate + diphosphate. It functions in the pathway sulfur metabolism; hydrogen sulfide biosynthesis; sulfite from sulfate: step 1/3. With CysN forms the ATP sulfurylase (ATPS) that catalyzes the adenylation of sulfate producing adenosine 5'-phosphosulfate (APS) and diphosphate, the first enzymatic step in sulfur assimilation pathway. APS synthesis involves the formation of a high-energy phosphoric-sulfuric acid anhydride bond driven by GTP hydrolysis by CysN coupled to ATP hydrolysis by CysD. This is Sulfate adenylyltransferase subunit 2 from Maricaulis maris (strain MCS10) (Caulobacter maris).